The following is a 246-amino-acid chain: Major prion protein (246 aa).

A signal peptide spans 1-15 (MLVLFVATWSDLGLC). The interval 16-223 (KKRPKPGGWN…ESQAYYQRGS (208 aa)) is interaction with GRB2, ERI3 and SYN1. Residues 18–102 (RPKPGGWNTG…HKPSKPKTSM (85 aa)) form a disordered region. Repeat copies occupy residues 44–52 (PQGGGGWGQ), 53–60 (PHGGGWGQ), 61–68 (PHGGGWGQ), 69–76 (PHGGGWGQ), and 77–84 (PHGGGWGQ). The interval 44–84 (PQGGGGWGQPHGGGWGQPHGGGWGQPHGGGWGQPHGGGWGQ) is 5 X 8 AA tandem repeats of P-H-G-G-G-W-G-Q. The span at 45–88 (QGGGGWGQPHGGGWGQPHGGGWGQPHGGGWGQPHGGGWGQGGGT) shows a compositional bias: gly residues. Residues H54, G55, G56, H62, G63, G64, H70, G71, G72, H78, G79, and G80 each contribute to the Cu(2+) site. Residues 91–102 (QWHKPSKPKTSM) are compositionally biased toward basic residues. C172 and C207 are disulfide-bonded. N174 and N190 each carry an N-linked (GlcNAc...) asparagine glycan. S223 carries the GPI-anchor amidated serine lipid modification. The propeptide at 224 to 246 (SMVLFSSPPVILLISFLIFLIVG) is removed in mature form.

Belongs to the prion family. In terms of assembly, monomer and homodimer. Has a tendency to aggregate into amyloid fibrils containing a cross-beta spine, formed by a steric zipper of superposed beta-strands. Soluble oligomers may represent an intermediate stage on the path to fibril formation. Copper binding may promote oligomerization. Interacts with GRB2, APP, ERI3/PRNPIP and SYN1. Mislocalized cytosolically exposed PrP interacts with MGRN1; this interaction alters MGRN1 subcellular location and causes lysosomal enlargement. Interacts with KIAA1191.

The protein resides in the cell membrane. It is found in the golgi apparatus. Functionally, its primary physiological function is unclear. Has cytoprotective activity against internal or environmental stresses. May play a role in neuronal development and synaptic plasticity. May be required for neuronal myelin sheath maintenance. May play a role in iron uptake and iron homeostasis. Soluble oligomers are toxic to cultured neuroblastoma cells and induce apoptosis (in vitro). Association with GPC1 (via its heparan sulfate chains) targets PRNP to lipid rafts. Also provides Cu(2+) or Zn(2+) for the ascorbate-mediated GPC1 deaminase degradation of its heparan sulfate side chains. In Cercopithecus mona (Mona monkey), this protein is Major prion protein (PRNP).